Reading from the N-terminus, the 101-residue chain is Citrate lyase acyl carrier protein (101 aa).

At Ser14 the chain carries O-(phosphoribosyl dephospho-coenzyme A)serine.

The protein belongs to the CitD family. As to quaternary structure, oligomer with a subunit composition of (alpha,beta,gamma)6.

The protein resides in the cytoplasm. In terms of biological role, covalent carrier of the coenzyme of citrate lyase. In Clostridium perfringens (strain 13 / Type A), this protein is Citrate lyase acyl carrier protein.